The primary structure comprises 70 residues: Large ribosomal subunit protein uL29 (70 aa).

Belongs to the universal ribosomal protein uL29 family.

The sequence is that of Large ribosomal subunit protein uL29 from Prochlorococcus marinus (strain MIT 9313).